Consider the following 246-residue polypeptide: NLP effector protein 2 (246 aa).

The signal sequence occupies residues 1–19 (MKFVVFLCAIAAVVATIQG). Positions 113 to 123 (AIMYSWYFPKD) match the Conserved undecapeptide motif I motif. Residues 130–136 (GHRHDWE) carry the Hepta-peptide GHRHDWE motif II motif.

Belongs to the Necrosis inducing protein (NPP1) family.

The protein resides in the secreted. Its function is as follows. Secreted effector that contributes strongly to virulence during infection by P.capsici. Causes large necrotic areas in both host C.annuum and non-host N.benthamiana. The chain is NLP effector protein 2 from Phytophthora capsici.